Consider the following 681-residue polypeptide: UvrABC system protein B (681 aa).

Residues 32 to 419 (ARLSRGERDV…GGEYVEQVIR (388 aa)) enclose the Helicase ATP-binding domain. An ATP-binding site is contributed by 45–52 (GATGTGKS). The short motif at 98–121 (YYDYYQPEAYIAQTDTYIEKDSSI) is the Beta-hairpin element. Residues 436–602 (QIDDLIHEIK…PLRKKIADIL (167 aa)) enclose the Helicase C-terminal domain. Over residues 607 to 616 (ESKAESTAPS) the composition is skewed to polar residues. A disordered region spans residues 607 to 626 (ESKAESTAPSSDAVVVSKTN). The UVR domain maps to 636-671 (RSLIDDLTTQMGTAARELKFELAGRLRDEIAELKKE).

It belongs to the UvrB family. In terms of assembly, forms a heterotetramer with UvrA during the search for lesions. Interacts with UvrC in an incision complex.

The protein localises to the cytoplasm. The UvrABC repair system catalyzes the recognition and processing of DNA lesions. A damage recognition complex composed of 2 UvrA and 2 UvrB subunits scans DNA for abnormalities. Upon binding of the UvrA(2)B(2) complex to a putative damaged site, the DNA wraps around one UvrB monomer. DNA wrap is dependent on ATP binding by UvrB and probably causes local melting of the DNA helix, facilitating insertion of UvrB beta-hairpin between the DNA strands. Then UvrB probes one DNA strand for the presence of a lesion. If a lesion is found the UvrA subunits dissociate and the UvrB-DNA preincision complex is formed. This complex is subsequently bound by UvrC and the second UvrB is released. If no lesion is found, the DNA wraps around the other UvrB subunit that will check the other stand for damage. This chain is UvrABC system protein B, found in Corynebacterium diphtheriae (strain ATCC 700971 / NCTC 13129 / Biotype gravis).